Reading from the N-terminus, the 378-residue chain is Transcription factor YY2 (378 aa).

The tract at residues 39 to 113 (LETSVGQTIE…DNLLFSPEFG (75 aa)) is mediates transcriptional activation. The mediates transcriptional repression stretch occupies residues 243–378 (EFTSMRPKKP…LTHVKNKNDQ (136 aa)). 4 C2H2-type zinc fingers span residues 260-284 (IACS…LHIH), 289-311 (HVCA…QLVH), 317-341 (YQCT…VRIH), and 347-371 (FVCP…ILTH).

Belongs to the YY transcription factor family. In terms of tissue distribution, weakly expressed by neuronal and glial cells in the cerebral cortex. Expressed by Purkinje cells and in the granular layers of the cerebellum. Expressed in all layers of spermatocytes in testis but not detected in sperm cells.

Its subcellular location is the nucleus. Functionally, functions as a multifunctional transcription factor that may exhibit positive and negative control on a large number of genes. May antagonize YY1 and function in development and differentiation. The chain is Transcription factor YY2 (Yy2) from Mus musculus (Mouse).